Consider the following 646-residue polypeptide: Protein kinase YegI (646 aa).

Residues 13-300 (VTPGRELGKG…KAWVAALDLL (288 aa)) form the Protein kinase domain. Residues 19–27 (LGKGGEGAV) and Lys39 contribute to the ATP site. Residue Asp141 is the Proton acceptor of the active site.

In terms of processing, autophosphorylated.

Functionally, probable serine/threonine kinase. The protein is Protein kinase YegI (yegI) of Escherichia coli O157:H7.